The following is a 1385-amino-acid chain: MLNSLHSGNRLRVDFSKTPREIEIPNLLQLQQKSYENFLMLGERDRKHSTLERVFRSAFPIHDQQNRLTLTYKNSEIIKPKYTVRECMERGLTYSVSLKMNIALTIWNRDEKTGEKLDPKEIKEQAVFVRDIPLMTERTSFVVNGVERVIVNQLHRSPGVIFKEEESTTAGHKLLYSAQIIPDRGSWLYFEYDAKDILYARINKRRKIPVTILFRALDYTKEDIVKLFYPTKEISIKDNRFLVKFDPSDFSGRAEYDVKDMDGNVIVNAGKRLTKKKAQQLIENGLEWIEYPLEMLMERHLATAVIDQESGEVLYDVVAPLDETKLKKMIEQGIESIEIINDLAEGTDKSIINAFIADNESLRLLKQTEEIDDENVLSAIRIYKVMRPGEPVTPEAAKSFLRQLFFDPERYDLTEVGRMKMNHKLGLDIPQYATVLTAEDLINTVKYLIKVKNGHGHIDDRDHLGNRRIRAIGELLGNELHNGLVKMQKAIKDKMTTISGTLDELMPHDLVNSKMITNTILEFFSSGQLSQFMDQTNPLSEVTHKRRLSALGEGGLVKERAGFEVRDVHPTHYGRICPIETPEGQNIGLINTLATYSKVNEHGFIEAPYKVVKDAQVTDEIVYITATQEEDKCIAPASTKVDENGKIVEDLIETRLNGNIELNEAKRVDLIDISPLMISGSAAALIPFLEHDDANRALMGSNMQRQAVPLLKTDAPVVGTGMEAIVSRDAWEAVKAKRAGKVEKVDAKNIYIMGEDETGVFIDHYPLEKNMRTNQNTTFTQTPIVKLGDVIEVGQVIADGANMDQGELAIGKNIMVAFMPWYGYNYEDAIIVSEKIIREDTFTSVHTYEKEVEARELKHGTEEITRDIPNIREDELLHLDESGIVQLGTYVKPGMILVGKVSPKGEIKPTPEERLLRAIFGEKAGHVVNKSLYCPASMEGVVVDIKVFTKKGYEKDARAIQAYEEEKAILDSDHHDQLLMIDREEILRIAHYLSGQELAKDVTIGDKEYKAGSKIDEETIKGVNRFALRGVVQSYSDDVQNEYEALKNYFLKQKKRLKNEHEEKLSILEKDDILPSGVTKLVKIYIATKRKLKVGDKMAGRHGNKGIVSNIVPEIDMPYMEDGRPVEIILNPLGVPSRMNIGQILEVHLGLVGMRLGEQIQEMFDNKTADFIKELRAKMIEIADVAKLMNAKEVLSQMSDEELLAYGRDWSRGVKFAAPVFEGTNQTEFDKLFELAKIESDGKMTLYDGKTGEKMIERVNVGYMYMLKLHHLVDEKVHARSTGPYSLVTQQPVGGKALFGGQRFGEMEVWALEAYGASHILKEMLTIKSDDVEGRARAYRALTKGESVPASGVPETMFVLTKELQALGLDAELYESKKEVESEDE.

The protein belongs to the RNA polymerase beta chain family. In terms of assembly, the RNAP catalytic core consists of 2 alpha, 1 beta, 1 beta' and 1 omega subunit. When a sigma factor is associated with the core the holoenzyme is formed, which can initiate transcription.

The enzyme catalyses RNA(n) + a ribonucleoside 5'-triphosphate = RNA(n+1) + diphosphate. Its function is as follows. DNA-dependent RNA polymerase catalyzes the transcription of DNA into RNA using the four ribonucleoside triphosphates as substrates. This chain is DNA-directed RNA polymerase subunit beta, found in Sulfurovum sp. (strain NBC37-1).